A 543-amino-acid polypeptide reads, in one-letter code: Rop guanine nucleotide exchange factor 11 (543 aa).

Residues Gln-61 to Val-89 are disordered. A PRONE domain is found at Met-95–Ala-456.

Interacts with ARAC4/ROP2, ARAC3/ROP, ARAC9/ROP8, PHYA and PHYB. Highly expressed in elongating regions of roots and pollen grains. Expressed in flowers, and at lower levels in leaves and stems.

It localises to the cytoplasm. Guanine-nucleotide exchange factor (GEF) that acts as an activator of Rop (Rho of plants) GTPases by promoting the exchange of GDP for GTP. Functions as a light-signaling switch that functions in root growth and development through the activation of Rop in a phytochrome-dependent manner. May act as a negative regulator of phytochrome-mediated primary root development. The polypeptide is Rop guanine nucleotide exchange factor 11 (ROPGEF11) (Arabidopsis thaliana (Mouse-ear cress)).